We begin with the raw amino-acid sequence, 469 residues long: Adenosylhomocysteinase (469 aa).

Substrate contacts are provided by Thr63, Asp139, and Glu164. Residue Thr165–Thr167 coordinates NAD(+). Substrate contacts are provided by Lys194 and Asp198. NAD(+) is bound by residues Asn199, Gly228–Gly233, Glu251, Asn300, Ile321–His323, and Asn375.

Belongs to the adenosylhomocysteinase family. Requires NAD(+) as cofactor.

It is found in the cytoplasm. It catalyses the reaction S-adenosyl-L-homocysteine + H2O = L-homocysteine + adenosine. It participates in amino-acid biosynthesis; L-homocysteine biosynthesis; L-homocysteine from S-adenosyl-L-homocysteine: step 1/1. May play a key role in the regulation of the intracellular concentration of adenosylhomocysteine. This Pseudomonas putida (strain GB-1) protein is Adenosylhomocysteinase.